Reading from the N-terminus, the 621-residue chain is E3 SUMO-protein ligase PIAS2 (621 aa).

One can recognise an SAP domain in the interval 11–45 (VSSFRVSELQVLLGFAGRNKSGRKHDLLMRALHLL). The short motif at 19–23 (LQVLL) is the LXXLL motif element. Glycyl lysine isopeptide (Lys-Gly) (interchain with G-Cter in SUMO2) cross-links involve residues lysine 46 and lysine 249. The 166-residue stretch at 134–299 (QPSPPIPPVH…SMSVYLVRQL (166 aa)) folds into the PINIT domain. An SP-RING-type zinc finger spans residues 331-412 (PDSEIATTSL…FMEILNDCSD (82 aa)). Zn(2+)-binding residues include cysteine 362, histidine 364, cysteine 385, and cysteine 388. Glycyl lysine isopeptide (Lys-Gly) (interchain with G-Cter in SUMO2) cross-links involve residues lysine 430, lysine 435, lysine 443, and lysine 452. Residues 467–473 (VDVIDLT) form an SUMO1-binding region. Serine 476, serine 477, and serine 478 each carry phosphoserine. Positions 484-492 (PPAKRKCIF) match the Nuclear localization signal motif. A Glycyl lysine isopeptide (Lys-Gly) (interchain with G-Cter in SUMO2) cross-link involves residue lysine 489. A Phosphoserine modification is found at serine 499. Residues lysine 502 and glutamine 562 each participate in a glycyl lysine isopeptide (Lys-Gly) (interchain with G-Cter in SUMO2) cross-link. Over residues 579–610 (SSTSVTTTSSHESSTHVSSSSSRSETGVITSS) the composition is skewed to low complexity. Residues 579 to 621 (SSTSVTTTSSHESSTHVSSSSSRSETGVITSSGSNIPDIISLD) are disordered.

The protein belongs to the PIAS family. As to quaternary structure, binds SUMO1 and UBE2I. Interacts with AXIN1, JUN, MDM2, PARK7, TP53 and TP73 isoform alpha, but not TP73 isoform beta. Interacts with STAT4 following IL12 and IFN-alpha stimulation of T-cells. Interacts also with GTF2I, GTF2IRD1, IKFZ1, DAB2 and MSX2, as well as with several steroid receptors, including ESR1, ESR2, NR3C1, PGR, AR, and with NCOA2. Sumoylation of a target protein seems to enhance the interaction. Binds to sumoylated ELK1. Binds DNA, such as CDKN1A promoter, in a sequence-specific manner. Interacts with PLAG1. Interacts with KLF8; the interaction results in SUMO ligation and repression of KLF8 transcriptional activity and of its cell cycle progression into G(1) phase. PIAS2-beta interacts with IFIH1/MDA5. Isoform PIAS2-alpha interacts with PML (isoform PML-12). Interacts with PRDM1/Blimp-1. Sumoylated. In terms of tissue distribution, mainly expressed in testis. Isoform 3 is expressed predominantly in adult testis, weakly in pancreas, embryonic testis and sperm, and at very low levels in other organs.

It is found in the nucleus speckle. The protein localises to the nucleus. Its subcellular location is the PML body. Its pathway is protein modification; protein sumoylation. In terms of biological role, functions as an E3-type small ubiquitin-like modifier (SUMO) ligase, stabilizing the interaction between UBE2I and the substrate, and as a SUMO-tethering factor. Plays a crucial role as a transcriptional coregulator in various cellular pathways, including the STAT pathway, the p53 pathway and the steroid hormone signaling pathway. The effects of this transcriptional coregulation, transactivation or silencing may vary depending upon the biological context and the PIAS2 isoform studied. However, it seems to be mostly involved in gene silencing. Binds to sumoylated ELK1 and enhances its transcriptional activity by preventing recruitment of HDAC2 by ELK1, thus reversing SUMO-mediated repression of ELK1 transactivation activity. Isoform PIAS2-beta, but not isoform PIAS2-alpha, promotes MDM2 sumoylation. Isoform PIAS2-alpha promotes PARK7 sumoylation. Isoform PIAS2-beta promotes NCOA2 sumoylation more efficiently than isoform PIAS2-alpha. Isoform PIAS2-alpha sumoylates PML at'Lys-65' and 'Lys-160'. In Homo sapiens (Human), this protein is E3 SUMO-protein ligase PIAS2 (PIAS2).